We begin with the raw amino-acid sequence, 139 residues long: D-ribose pyranase (139 aa).

The active-site Proton donor is the His20. Substrate-binding positions include Asp28, His106, and 128-130 (YAN).

The protein belongs to the RbsD / FucU family. RbsD subfamily. As to quaternary structure, homodecamer.

It localises to the cytoplasm. It carries out the reaction beta-D-ribopyranose = beta-D-ribofuranose. It functions in the pathway carbohydrate metabolism; D-ribose degradation; D-ribose 5-phosphate from beta-D-ribopyranose: step 1/2. Functionally, catalyzes the interconversion of beta-pyran and beta-furan forms of D-ribose. The sequence is that of D-ribose pyranase from Vibrio parahaemolyticus serotype O3:K6 (strain RIMD 2210633).